The following is a 102-amino-acid chain: Small ribosomal subunit protein uS10 (102 aa).

This sequence belongs to the universal ribosomal protein uS10 family. Part of the 30S ribosomal subunit.

Involved in the binding of tRNA to the ribosomes. This Caulobacter sp. (strain K31) protein is Small ribosomal subunit protein uS10.